Here is a 465-residue protein sequence, read N- to C-terminus: Protein maelstrom (465 aa).

The segment at residues 2-69 (APKKHSGFMM…ADRGKRERLN (68 aa)) is a DNA-binding region (HMG box). Residues 415–440 (MRKSSKHTGPSVSTQRERNAGAWNLP) are disordered.

It belongs to the maelstrom family.

Its subcellular location is the cytoplasm. It localises to the nucleus. In terms of biological role, involved both in the piRNA and miRNA metabolic processes. As a component of the meiotic nuage, plays a central role during oogenesis by repressing transposable elements and preventing their mobilization, which is essential for the germline integrity. Repression of transposable elements is mediated via the piRNA metabolic process, which mediates the repression of transposable elements during meiosis by forming complexes composed of piRNAs and Piwi proteins and governs the repression of transposons. As a nuclear component, it is required for proper differentiation in the germline stem cell (GSC) lineage by repressing microRNA-7 (miR-7), thereby acting as an indirect regulator of bag-of-marbles (Bam). Acts by binding to the promoter of miR-7 gene and repressing its expression; miR-7 repression alleviates the Bam repression by miR-7, thereby allowing differentiation in the germline stem cell (GSC) lineage. This is Protein maelstrom (mael) from Drosophila yakuba (Fruit fly).